The chain runs to 202 residues: FMN-dependent NADH:quinone oxidoreductase 2 (202 aa).

FMN contacts are provided by residues Ser9, 15–17 (SAS), 95–98 (MYNF), and 139–142 (TAGG).

It belongs to the azoreductase type 1 family. Homodimer. FMN serves as cofactor.

The catalysed reaction is 2 a quinone + NADH + H(+) = 2 a 1,4-benzosemiquinone + NAD(+). It carries out the reaction N,N-dimethyl-1,4-phenylenediamine + anthranilate + 2 NAD(+) = 2-(4-dimethylaminophenyl)diazenylbenzoate + 2 NADH + 2 H(+). Functionally, quinone reductase that provides resistance to thiol-specific stress caused by electrophilic quinones. Reduces both benzoquinones and naphthoquinones efficiently. Also exhibits azoreductase activity. Catalyzes the reductive cleavage of the azo bond in aromatic azo compounds to the corresponding amines. Preferred substrates are the large bis-azo dye Ponceau BS, amaranth and tropaeolin O. In Pseudomonas aeruginosa (strain ATCC 15692 / DSM 22644 / CIP 104116 / JCM 14847 / LMG 12228 / 1C / PRS 101 / PAO1), this protein is FMN-dependent NADH:quinone oxidoreductase 2.